Here is a 480-residue protein sequence, read N- to C-terminus: Acetyl-coenzyme A carboxylase carboxyl transferase subunit beta, chloroplastic (480 aa).

Residues 25-48 (TSSLGPIENASESKDPNINDTDKN) are disordered. Positions 35–47 (SESKDPNINDTDK) are enriched in basic and acidic residues. The 265-residue stretch at 216 to 480 (LWVQCENCYG…LHTFFPLNQN (265 aa)) folds into the CoA carboxyltransferase N-terminal domain. 4 residues coordinate Zn(2+): Cys-220, Cys-223, Cys-239, and Cys-242. Residues 220–242 (CENCYGLNYKKFFKSKMNLCEQC) form a C4-type zinc finger.

This sequence belongs to the AccD/PCCB family. As to quaternary structure, acetyl-CoA carboxylase is a heterohexamer composed of biotin carboxyl carrier protein, biotin carboxylase and 2 subunits each of ACCase subunit alpha and ACCase plastid-coded subunit beta (accD). Requires Zn(2+) as cofactor.

The protein localises to the plastid. It is found in the chloroplast stroma. It catalyses the reaction N(6)-carboxybiotinyl-L-lysyl-[protein] + acetyl-CoA = N(6)-biotinyl-L-lysyl-[protein] + malonyl-CoA. It functions in the pathway lipid metabolism; malonyl-CoA biosynthesis; malonyl-CoA from acetyl-CoA: step 1/1. Its function is as follows. Component of the acetyl coenzyme A carboxylase (ACC) complex. Biotin carboxylase (BC) catalyzes the carboxylation of biotin on its carrier protein (BCCP) and then the CO(2) group is transferred by the transcarboxylase to acetyl-CoA to form malonyl-CoA. This Helianthus annuus (Common sunflower) protein is Acetyl-coenzyme A carboxylase carboxyl transferase subunit beta, chloroplastic.